The following is a 403-amino-acid chain: Cystinosin homolog (403 aa).

Residues 1–122 (MKLPVSILFF…YSRITVIRSH (122 aa)) are Lumenal-facing. N45, N52, N78, and N96 each carry an N-linked (GlcNAc...) asparagine glycan. The chain crosses the membrane as a helical span at residues 123-143 (WLAILIQIVGWTYFAAWSVSF). Residues 124–190 (LAILIQIVGW…MYYNSHVKNI (67 aa)) enclose the PQ-loop 1 domain. The Cytoplasmic portion of the chain corresponds to 144 to 162 (YPQMYLNFKRKSVVGLNFD). The helical transmembrane segment at 163 to 183 (FLSLNLVGFGAYAMFNLLMYY) threads the bilayer. Residues 184 to 206 (NSHVKNIYSMENPRSPPPVLLND) lie on the Lumenal side of the membrane. Residues 207–227 (VVFAVHAFLACFVTILQCIFY) form a helical membrane-spanning segment. Residues 228–237 (ERDQQRISTK) are Cytoplasmic-facing. Residues 238-258 (CIILIIGLVSFGFVSVVVTVL) form a helical membrane-spanning segment. The Lumenal segment spans residues 259-260 (NK). Residues 261 to 283 (ITILDFVVSLSYIKMAVTCCKYF) form a helical membrane-spanning segment. The region spanning 266–326 (FVVSLSYIKM…MVLQAINVND (61 aa)) is the PQ-loop 2 domain. At 284 to 294 (PQAYFNYQRKS) the chain is on the cytoplasmic side. A helical membrane pass occupies residues 295–315 (TVGWSIGNILLDFTGGSLDIL). At 316-336 (QMVLQAINVNDWSAFYANPVK) the chain is on the lumenal side. The helical transmembrane segment at 337–357 (FGLGFVSIFFDIIFMIQHYAL) threads the bilayer. The Cytoplasmic portion of the chain corresponds to 358-403 (YPDAEVPHNEYHGVDNPDPDSIVRDAEHGAADNESMESTDPIIVHD). A compositionally biased stretch (basic and acidic residues) spans 374–388 (PDPDSIVRDAEHGAA). Residues 374–403 (PDPDSIVRDAEHGAADNESMESTDPIIVHD) are disordered.

Belongs to the cystinosin family.

It localises to the lysosome membrane. Its subcellular location is the cytoplasmic vesicle. It is found in the phagosome. The catalysed reaction is L-cystine(out) + H(+)(out) = L-cystine(in) + H(+)(in). Its function is as follows. Cystine/H(+) symporter that mediates export of cystine, the oxidized dimer of cysteine, from lysosomes. May play a role in the degradation of engulfed apoptotic cells. This chain is Cystinosin homolog (ctns-1), found in Caenorhabditis briggsae.